Consider the following 716-residue polypeptide: Fatty acid oxidation complex subunit alpha (716 aa).

Residues 1–189 (MIYQSPTIQV…KVGAVDAVVA (189 aa)) form an enoyl-CoA hydratase/isomerase region. Asp296 contributes to the substrate binding site. Positions 311-716 (KEVNNAAVLG…AANNGSYYQA (406 aa)) are 3-hydroxyacyl-CoA dehydrogenase. NAD(+) is bound by residues Met324, Asp343, 400–402 (VVE), Lys407, and Ser429. His450 functions as the For 3-hydroxyacyl-CoA dehydrogenase activity in the catalytic mechanism. Asn453 lines the NAD(+) pocket. 2 residues coordinate substrate: Asn500 and Tyr660.

The protein in the N-terminal section; belongs to the enoyl-CoA hydratase/isomerase family. This sequence in the C-terminal section; belongs to the 3-hydroxyacyl-CoA dehydrogenase family. In terms of assembly, heterotetramer of two alpha chains (FadB) and two beta chains (FadA).

The enzyme catalyses a (3S)-3-hydroxyacyl-CoA + NAD(+) = a 3-oxoacyl-CoA + NADH + H(+). It catalyses the reaction a (3S)-3-hydroxyacyl-CoA = a (2E)-enoyl-CoA + H2O. The catalysed reaction is a 4-saturated-(3S)-3-hydroxyacyl-CoA = a (3E)-enoyl-CoA + H2O. It carries out the reaction (3S)-3-hydroxybutanoyl-CoA = (3R)-3-hydroxybutanoyl-CoA. The enzyme catalyses a (3Z)-enoyl-CoA = a 4-saturated (2E)-enoyl-CoA. It catalyses the reaction a (3E)-enoyl-CoA = a 4-saturated (2E)-enoyl-CoA. It participates in lipid metabolism; fatty acid beta-oxidation. In terms of biological role, involved in the aerobic and anaerobic degradation of long-chain fatty acids via beta-oxidation cycle. Catalyzes the formation of 3-oxoacyl-CoA from enoyl-CoA via L-3-hydroxyacyl-CoA. It can also use D-3-hydroxyacyl-CoA and cis-3-enoyl-CoA as substrate. The protein is Fatty acid oxidation complex subunit alpha of Shewanella baltica (strain OS155 / ATCC BAA-1091).